The sequence spans 504 residues: Putative pentatricopeptide repeat-containing protein At3g28640 (504 aa).

PPR repeat units lie at residues 77 to 107 (NSFV…MVKE), 115 to 149 (SYLT…GVFL), 151 to 181 (DSHV…IPQP), 182 to 216 (DVVK…GLEP), 217 to 251 (DEFS…SWIE), 253 to 287 (DVFV…NVFS), 288 to 319 (WAAL…GIKP), 320 to 350 (DSVV…MEAR), and 356 to 390 (KHEH…PLAS). The type E motif stretch occupies residues 391–470 (VWGALLNGCR…TPGWSVLEVD (80 aa)). A type E(+) motif region spans residues 471–501 (GNVTKFVSGDVSHPNLLQIHTVIHLLSVDAL).

It belongs to the PPR family. PCMP-E subfamily.

The protein is Putative pentatricopeptide repeat-containing protein At3g28640 (PCMP-E79) of Arabidopsis thaliana (Mouse-ear cress).